A 129-amino-acid chain; its full sequence is Small ribosomal subunit protein uS11 (129 aa).

Belongs to the universal ribosomal protein uS11 family. As to quaternary structure, part of the 30S ribosomal subunit. Interacts with proteins S7 and S18. Binds to IF-3.

Its function is as follows. Located on the platform of the 30S subunit, it bridges several disparate RNA helices of the 16S rRNA. Forms part of the Shine-Dalgarno cleft in the 70S ribosome. In Cereibacter sphaeroides (strain ATCC 17029 / ATH 2.4.9) (Rhodobacter sphaeroides), this protein is Small ribosomal subunit protein uS11.